A 116-amino-acid polypeptide reads, in one-letter code: Cell division protein FtsL (116 aa).

Residues 1–24 (MMLTNRQIRVRLFESLKNSFFKKT) lie on the Cytoplasmic side of the membrane. Residues 25–45 (VGISFALLFILLITAFSLIVV) form a helical membrane-spanning segment. At 46–116 (RFEYKLQLNE…NEQKEELNNE (71 aa)) the chain is on the periplasmic side.

Belongs to the FtsL family. As to quaternary structure, part of a complex composed of FtsB, FtsL and FtsQ.

Its subcellular location is the cell inner membrane. In terms of biological role, essential cell division protein. May link together the upstream cell division proteins, which are predominantly cytoplasmic, with the downstream cell division proteins, which are predominantly periplasmic. This Francisella tularensis subsp. tularensis (strain SCHU S4 / Schu 4) protein is Cell division protein FtsL.